The following is a 250-amino-acid chain: NADH-quinone oxidoreductase subunit C (250 aa).

It belongs to the complex I 30 kDa subunit family. NDH-1 is composed of 14 different subunits. Subunits NuoB, C, D, E, F, and G constitute the peripheral sector of the complex.

The protein resides in the cell inner membrane. It catalyses the reaction a quinone + NADH + 5 H(+)(in) = a quinol + NAD(+) + 4 H(+)(out). Its function is as follows. NDH-1 shuttles electrons from NADH, via FMN and iron-sulfur (Fe-S) centers, to quinones in the respiratory chain. The immediate electron acceptor for the enzyme in this species is believed to be ubiquinone. Couples the redox reaction to proton translocation (for every two electrons transferred, four hydrogen ions are translocated across the cytoplasmic membrane), and thus conserves the redox energy in a proton gradient. The protein is NADH-quinone oxidoreductase subunit C of Xanthomonas euvesicatoria pv. vesicatoria (strain 85-10) (Xanthomonas campestris pv. vesicatoria).